The following is a 184-amino-acid chain: ATP synthase subunit b, chloroplastic (184 aa).

A helical transmembrane segment spans residues 27–49; that stretch reads LATNPINLSVVFGVLIFFGKGVL.

Belongs to the ATPase B chain family. As to quaternary structure, F-type ATPases have 2 components, F(1) - the catalytic core - and F(0) - the membrane proton channel. F(1) has five subunits: alpha(3), beta(3), gamma(1), delta(1), epsilon(1). F(0) has four main subunits: a(1), b(1), b'(1) and c(10-14). The alpha and beta chains form an alternating ring which encloses part of the gamma chain. F(1) is attached to F(0) by a central stalk formed by the gamma and epsilon chains, while a peripheral stalk is formed by the delta, b and b' chains.

It localises to the plastid. It is found in the chloroplast thylakoid membrane. In terms of biological role, f(1)F(0) ATP synthase produces ATP from ADP in the presence of a proton or sodium gradient. F-type ATPases consist of two structural domains, F(1) containing the extramembraneous catalytic core and F(0) containing the membrane proton channel, linked together by a central stalk and a peripheral stalk. During catalysis, ATP synthesis in the catalytic domain of F(1) is coupled via a rotary mechanism of the central stalk subunits to proton translocation. Its function is as follows. Component of the F(0) channel, it forms part of the peripheral stalk, linking F(1) to F(0). This is ATP synthase subunit b, chloroplastic from Lobularia maritima (Sweet alyssum).